Here is a 166-residue protein sequence, read N- to C-terminus: Small ribosomal subunit protein uS5 (166 aa).

Residues 10-73 (QIEKLISLNR…TSARKNLRFV (64 aa)) form the S5 DRBM domain.

Belongs to the universal ribosomal protein uS5 family. As to quaternary structure, part of the 30S ribosomal subunit. Contacts proteins S4 and S8.

In terms of biological role, with S4 and S12 plays an important role in translational accuracy. Its function is as follows. Located at the back of the 30S subunit body where it stabilizes the conformation of the head with respect to the body. The chain is Small ribosomal subunit protein uS5 from Borrelia garinii subsp. bavariensis (strain ATCC BAA-2496 / DSM 23469 / PBi) (Borreliella bavariensis).